We begin with the raw amino-acid sequence, 61 residues long: Large ribosomal subunit protein uL29 (61 aa).

Belongs to the universal ribosomal protein uL29 family.

The chain is Large ribosomal subunit protein uL29 from Xanthomonas campestris pv. campestris (strain 8004).